The primary structure comprises 407 residues: Glycolate oxidase iron-sulfur subunit (407 aa).

4Fe-4S ferredoxin-type domains are found at residues 14-47 (RALE…ELDG) and 66-95 (LKTQ…HNLL). Residues Cys-25, Cys-28, Cys-31, Cys-35, Cys-75, Cys-78, Cys-81, and Cys-85 each contribute to the [4Fe-4S] cluster site.

The glycolate oxidase likely consists of three subunits, GlcD, GlcE and GlcF. [4Fe-4S] cluster serves as cofactor.

The protein localises to the cell inner membrane. The catalysed reaction is glycolate + A = glyoxylate + AH2. It carries out the reaction (R)-lactate + A = pyruvate + AH2. Its activity is regulated as follows. In vitro the glycolate oxidase activity is inhibited by the sulfhydryl inhibitors CuSO4 and PCMB, by KCN, but not by the metal complexing agent EDTA. Its function is as follows. Component of a complex that catalyzes the oxidation of glycolate to glyoxylate. Is required for E.coli to grow on glycolate as a sole source of carbon. Is also able to oxidize D-lactate ((R)-lactate) with a similar rate. Does not link directly to O(2), and 2,6-dichloroindophenol (DCIP) and phenazine methosulfate (PMS) can act as artificial electron acceptors in vitro, but the physiological molecule that functions as a primary electron acceptor during glycolate oxidation is unknown. The sequence is that of Glycolate oxidase iron-sulfur subunit from Escherichia coli (strain K12).